The following is a 267-amino-acid chain: Translation initiation factor 2 subunit alpha (267 aa).

Residues 12–83 form the S1 motif domain; that stretch reads GEIVMATVER…KRKYANLSLR (72 aa).

Belongs to the eIF-2-alpha family. As to quaternary structure, heterotrimer composed of an alpha, a beta and a gamma chain.

Functionally, eIF-2 functions in the early steps of protein synthesis by forming a ternary complex with GTP and initiator tRNA. The polypeptide is Translation initiation factor 2 subunit alpha (Methanopyrus kandleri (strain AV19 / DSM 6324 / JCM 9639 / NBRC 100938)).